A 317-amino-acid polypeptide reads, in one-letter code: Retinol dehydrogenase 7 (317 aa).

Residue 33 to 57 (FITGCDSGFGNLLARQLDRRGMRVL) participates in NADP(+) binding. Serine 164 contacts substrate. Tyrosine 176 serves as the catalytic Proton acceptor.

The protein belongs to the short-chain dehydrogenases/reductases (SDR) family.

The protein resides in the microsome. It localises to the endoplasmic reticulum. It carries out the reaction all-trans-retinol--[retinol-binding protein] + NAD(+) = all-trans-retinal--[retinol-binding protein] + NADH + H(+). It functions in the pathway cofactor metabolism; retinol metabolism. Acts on retinol bound on cellular retinol-binding protein (CRBP). In Rattus norvegicus (Rat), this protein is Retinol dehydrogenase 7.